The following is a 452-amino-acid chain: Ribosomal protein uS12 methylthiotransferase RimO (452 aa).

Positions 5-116 constitute an MTTase N-terminal domain; sequence PTIAFSHLGC…IVDVLQRTES (112 aa). Cys-14, Cys-50, Cys-79, Cys-154, Cys-158, and Cys-161 together coordinate [4Fe-4S] cluster. The Radical SAM core domain occupies 140–369; it reads TTTSAVAYLR…MATQQPIAER (230 aa). In terms of domain architecture, TRAM spans 372–438; that stretch reads RAQIGRLVDV…IYDLHGEVAS (67 aa).

Belongs to the methylthiotransferase family. RimO subfamily. [4Fe-4S] cluster serves as cofactor.

It localises to the cytoplasm. The catalysed reaction is L-aspartate(89)-[ribosomal protein uS12]-hydrogen + (sulfur carrier)-SH + AH2 + 2 S-adenosyl-L-methionine = 3-methylsulfanyl-L-aspartate(89)-[ribosomal protein uS12]-hydrogen + (sulfur carrier)-H + 5'-deoxyadenosine + L-methionine + A + S-adenosyl-L-homocysteine + 2 H(+). Its function is as follows. Catalyzes the methylthiolation of an aspartic acid residue of ribosomal protein uS12. The polypeptide is Ribosomal protein uS12 methylthiotransferase RimO (Synechococcus elongatus (strain ATCC 33912 / PCC 7942 / FACHB-805) (Anacystis nidulans R2)).